The primary structure comprises 863 residues: Leucine--tRNA ligase (863 aa).

The short motif at 42–52 (PYPSGRLHMGH) is the 'HIGH' region element. Positions 618–622 (KMSKS) match the 'KMSKS' region motif. K621 is a binding site for ATP.

Belongs to the class-I aminoacyl-tRNA synthetase family.

Its subcellular location is the cytoplasm. It catalyses the reaction tRNA(Leu) + L-leucine + ATP = L-leucyl-tRNA(Leu) + AMP + diphosphate. This chain is Leucine--tRNA ligase, found in Colwellia psychrerythraea (strain 34H / ATCC BAA-681) (Vibrio psychroerythus).